A 545-amino-acid polypeptide reads, in one-letter code: MSPNKRILRAVYLSLFFIGIFMLLDDFLFSRKASSFMNEEIKFDLNKDFDIDNSLIDEDFTFNLSDNSEDINVDTDIYHATFATFGGNLISLKLKNHLNLDKKPTEIVKMHPQNQSLFYITLDKLSKSLFLYEQIDSHVHDFKTNVEVNGKYYEYIKRYTFSKSNEYLIKLEIFLNNIDVNDDIGIDFYKFVLNSGIEELSAKGKLQYNNYLSHAIYYDTKLRYGKDGLNIANPKWVGAGTKYFEVLVSKENMKVEFKHENKVLNAFILNKLDNKNVSDVFYIYAGPRDNKYLDIFNQRELNSFGLSNVEFGMSVEKSLLYFLQVPMQLIMQIFYNVIPNWGLSIMFLTIVVRILIFPLTFKSFRATAELSKLQPKMKEIQVKFKSDPKRLNEEMSKLYREEGVNPIGGCFPILLQLPVFFALYGLVNNFFVLRGASFIPGWIDDLSIGDSIYYFGYKVFAWTDIRILPFIMMITQLLSTIVSSNVSFKSLGAQQKFLYFGMPIMFFFILYDMPSGLLIYWITTNIFTILQQYYIKMNLSERRNK.

6 helical membrane passes run 10 to 30, 319 to 339, 341 to 361, 407 to 427, 467 to 487, and 502 to 522; these read AVYLSLFFIGIFMLLDDFLFS, LLYFLQVPMQLIMQIFYNVIP, WGLSIMFLTIVVRILIFPLTF, IGGCFPILLQLPVFFALYGLV, ILPFIMMITQLLSTIVSSNVS, and MPIMFFFILYDMPSGLLIYWI.

Belongs to the OXA1/ALB3/YidC family. Type 1 subfamily. Interacts with the Sec translocase complex via SecD. Specifically interacts with transmembrane segments of nascent integral membrane proteins during membrane integration.

It localises to the cell inner membrane. Functionally, required for the insertion and/or proper folding and/or complex formation of integral membrane proteins into the membrane. Involved in integration of membrane proteins that insert both dependently and independently of the Sec translocase complex, as well as at least some lipoproteins. Aids folding of multispanning membrane proteins. The sequence is that of Membrane protein insertase YidC from Borrelia duttonii (strain Ly).